The primary structure comprises 241 residues: MSSLNSVLPSNACAEIIEGKDKVHNVVILMHGLGDSHKSFANMAKNVPLPNTSYISLRGPYRLPLDFENPGGNWMWGEDVHFDQNGELQSEADFSKSFTMISNLIGNLLSYGILSSRIFFFGFGQGAMVALYSCYKLSTKYQLGGIFSFGGTLPLSITLPNHPFHVPVYLFEKRLHCSCSEYEESRLRKTFKPFHLTCWNRDDKTDMPSSPREWYTFVQSISKHLYIHNTLFEDAIPLTSF.

Belongs to the AB hydrolase superfamily. AB hydrolase 2 family.

This is an uncharacterized protein from Schizosaccharomyces pombe (strain 972 / ATCC 24843) (Fission yeast).